Consider the following 338-residue polypeptide: Ketol-acid reductoisomerase (NADP(+)) (338 aa).

The 181-residue stretch at 1–181 (MNVFYDKDAD…GGGRAGIIET (181 aa)) folds into the KARI N-terminal Rossmann domain. NADP(+) contacts are provided by residues 24 to 27 (YGSQ), Arg-47, and Ser-52. The active site involves His-107. Gly-133 provides a ligand contact to NADP(+). One can recognise a KARI C-terminal knotted domain in the interval 182-327 (NFREETETDL…AKLRAMMPWI (146 aa)). Mg(2+) contacts are provided by Asp-190, Glu-194, Glu-226, and Glu-230. Ser-251 lines the substrate pocket.

This sequence belongs to the ketol-acid reductoisomerase family. Mg(2+) is required as a cofactor.

It carries out the reaction (2R)-2,3-dihydroxy-3-methylbutanoate + NADP(+) = (2S)-2-acetolactate + NADPH + H(+). The catalysed reaction is (2R,3R)-2,3-dihydroxy-3-methylpentanoate + NADP(+) = (S)-2-ethyl-2-hydroxy-3-oxobutanoate + NADPH + H(+). It participates in amino-acid biosynthesis; L-isoleucine biosynthesis; L-isoleucine from 2-oxobutanoate: step 2/4. The protein operates within amino-acid biosynthesis; L-valine biosynthesis; L-valine from pyruvate: step 2/4. In terms of biological role, involved in the biosynthesis of branched-chain amino acids (BCAA). Catalyzes an alkyl-migration followed by a ketol-acid reduction of (S)-2-acetolactate (S2AL) to yield (R)-2,3-dihydroxy-isovalerate. In the isomerase reaction, S2AL is rearranged via a Mg-dependent methyl migration to produce 3-hydroxy-3-methyl-2-ketobutyrate (HMKB). In the reductase reaction, this 2-ketoacid undergoes a metal-dependent reduction by NADPH to yield (R)-2,3-dihydroxy-isovalerate. This Burkholderia cenocepacia (strain ATCC BAA-245 / DSM 16553 / LMG 16656 / NCTC 13227 / J2315 / CF5610) (Burkholderia cepacia (strain J2315)) protein is Ketol-acid reductoisomerase (NADP(+)).